We begin with the raw amino-acid sequence, 419 residues long: Elongation factor Tu, chloroplastic (419 aa).

One can recognise a tr-type G domain in the interval 10–214 (KPHVNIGTIG…KVDEYIPTPD (205 aa)). The interval 19-26 (GHVDHGKT) is G1. 19-26 (GHVDHGKT) serves as a coordination point for GTP. Position 26 (Thr-26) interacts with Mg(2+). A G2 region spans residues 60 to 64 (GITIN). The segment at 81-84 (DCPG) is G3. GTP is bound by residues 81–85 (DCPGH) and 136–139 (NKED). Positions 136 to 139 (NKED) are G4. The interval 174–176 (SAL) is G5.

It belongs to the TRAFAC class translation factor GTPase superfamily. Classic translation factor GTPase family. EF-Tu/EF-1A subfamily.

The protein localises to the plastid. The protein resides in the chloroplast. The catalysed reaction is GTP + H2O = GDP + phosphate + H(+). In terms of biological role, GTP hydrolase that promotes the GTP-dependent binding of aminoacyl-tRNA to the A-site of ribosomes during protein biosynthesis. In Tetradesmus obliquus (Green alga), this protein is Elongation factor Tu, chloroplastic (tufA).